The sequence spans 132 residues: uncharacterized protein (132 aa).

This is an uncharacterized protein from Escherichia coli.